The sequence spans 302 residues: Elongation factor Ts (302 aa).

Residues Thr82 to Val85 are involved in Mg(2+) ion dislocation from EF-Tu.

Belongs to the EF-Ts family.

Its subcellular location is the cytoplasm. Functionally, associates with the EF-Tu.GDP complex and induces the exchange of GDP to GTP. It remains bound to the aminoacyl-tRNA.EF-Tu.GTP complex up to the GTP hydrolysis stage on the ribosome. In Nitrosospira multiformis (strain ATCC 25196 / NCIMB 11849 / C 71), this protein is Elongation factor Ts.